An 80-amino-acid polypeptide reads, in one-letter code: Omega-conotoxin-like 1 (80 aa).

A signal peptide spans 1–22 (MKLTCVLIVVVLFLTACQLITT). Positions 23 to 49 (DDSTGKQRYQAWKLRSKMQNSVLSRLS) are excised as a propeptide. 3 disulfides stabilise this stretch: Cys-52–Cys-66, Cys-59–Cys-70, and Cys-65–Cys-79.

It belongs to the conotoxin O1 superfamily. In terms of processing, peptide predicted to begin at Arg-51, but it seems more probable that it begins at Cys-52, since this position corresponds to a dibasic residue cleavage. In terms of tissue distribution, expressed by the venom duct.

Its subcellular location is the secreted. Omega-conotoxins act at presynaptic membranes, they bind and block voltage-gated calcium channels (Cav). The chain is Omega-conotoxin-like 1 from Conus capitaneus (Captain cone).